Reading from the N-terminus, the 193-residue chain is Rho-related protein racF2 (193 aa).

10–17 contributes to the GTP binding site; it reads GDGAVGKT. The short motif at 32–40 is the Effector region element; the sequence is YLPTVFDNY. GTP-binding positions include 57 to 61 and 115 to 118; these read DTAGQ and TKQD. Position 190 is a cysteine methyl ester (Cys-190). Cys-190 is lipidated: S-geranylgeranyl cysteine. The propeptide at 191–193 is removed in mature form; sequence TIM.

The protein belongs to the small GTPase superfamily. Rho family.

It localises to the cell membrane. The chain is Rho-related protein racF2 (racF2) from Dictyostelium discoideum (Social amoeba).